The primary structure comprises 64 residues: Large ribosomal subunit protein bL28 (64 aa).

This sequence belongs to the bacterial ribosomal protein bL28 family.

This chain is Large ribosomal subunit protein bL28, found in Campylobacter lari (strain RM2100 / D67 / ATCC BAA-1060).